Here is a 251-residue protein sequence, read N- to C-terminus: Triosephosphate isomerase (251 aa).

Substrate is bound at residue 10–12 (NWK). H95 acts as the Electrophile in catalysis. The active-site Proton acceptor is the E167. Substrate is bound by residues G173, S213, and 234-235 (GG).

The protein belongs to the triosephosphate isomerase family. Homodimer.

It is found in the cytoplasm. It catalyses the reaction D-glyceraldehyde 3-phosphate = dihydroxyacetone phosphate. It functions in the pathway carbohydrate biosynthesis; gluconeogenesis. Its pathway is carbohydrate degradation; glycolysis; D-glyceraldehyde 3-phosphate from glycerone phosphate: step 1/1. Involved in the gluconeogenesis. Catalyzes stereospecifically the conversion of dihydroxyacetone phosphate (DHAP) to D-glyceraldehyde-3-phosphate (G3P). This is Triosephosphate isomerase from Acetivibrio thermocellus (strain ATCC 27405 / DSM 1237 / JCM 9322 / NBRC 103400 / NCIMB 10682 / NRRL B-4536 / VPI 7372) (Clostridium thermocellum).